The chain runs to 94 residues: Progonadoliberin-3 (94 aa).

The N-terminal stretch at 1 to 23 (MEGKGRVLVQLLMLACVLEVSLC) is a signal peptide. Q24 bears the Pyrrolidone carboxylic acid mark. G33 carries the post-translational modification Glycine amide.

This sequence belongs to the GnRH family.

It localises to the secreted. In terms of biological role, stimulates the secretion of gonadotropins. The chain is Progonadoliberin-3 (gnrh3) from Carassius auratus (Goldfish).